The following is a 505-amino-acid chain: MKKYKITFIVLLLTLVGCSDLEENPVGILAPESFFKTTADLQAAINGSYASMSTESFWGRKLTLTLLLRGDLADIGDQGTSGRRKEVNNFTMGDDNGMVSAFWPQAYAIIGTANQAISNAGLINDDENKVNAVAAQAYFCRAFTYYHLVRLFGDIPYIDFAVSDASEIDAISKTPENEVYEGIIADLQYAKEWLPDTQFSRALPSKATAAAYLASVYLTRGDFQKAAEEAQFVINNEARFDLRLEPDFQNLFDANQTAGLKEPLFTIDYMGQISSSGYGQDYVASVTGIRGDATHEYGEGWSVAVPSLKVYQDWDAKDYRRAVSLDTTATSKSGEVYPYTQFEEYSDLAVNRPHIAKYYRYAGLAGNNGRESSTNYIPMRYAEVLLIAAEALNEISAGSSEAVSYVNRLRERARLGSGSMHPLNISEGLLQDELRNIIIEERKIELAFEFKRWYDIKRLKLGNEVFGPNGLEPQPNFDANRDYLLPLPGPELVRNSNLMPNNPGY.

The N-terminal stretch at 1–17 (MKKYKITFIVLLLTLVG) is a signal peptide. Residue Cys18 is the site of N-palmitoyl cysteine attachment. Residue Cys18 is the site of S-diacylglycerol cysteine attachment.

The protein belongs to the SusD family.

The protein localises to the cell outer membrane. Polysaccharide-binding protein probably involved in ulvan degradation. Ulvan is the main polysaccharide component of the Ulvales (green seaweed) cell wall. It is composed of disaccharide building blocks comprising 3-sulfated rhamnose (Rha3S) linked to D-glucuronic acid (GlcA), L-iduronic acid (IduA), or D-xylose (Xyl). The SusD-like protein may mediate ulvan oligomer-binding before transport in the periplasm for further degradation. The chain is SusD-like protein P2 from Formosa agariphila (strain DSM 15362 / KCTC 12365 / LMG 23005 / KMM 3901 / M-2Alg 35-1).